Here is a 287-residue protein sequence, read N- to C-terminus: Probable ribosomal RNA small subunit methyltransferase A (287 aa).

S-adenosyl-L-methionine contacts are provided by H29, L31, G56, E77, D102, and N117.

Belongs to the class I-like SAM-binding methyltransferase superfamily. rRNA adenine N(6)-methyltransferase family. RsmA subfamily.

It is found in the cytoplasm. Specifically dimethylates two adjacent adenosines in the loop of a conserved hairpin near the 3'-end of 16S rRNA in the 30S particle. May play a critical role in biogenesis of 30S subunits. The chain is Probable ribosomal RNA small subunit methyltransferase A from Methanosarcina barkeri (strain Fusaro / DSM 804).